We begin with the raw amino-acid sequence, 362 residues long: Erythritol/L-threitol dehydrogenase (362 aa).

Cys45, His76, Glu77, Cys109, Cys112, Cys115, and Cys123 together coordinate Zn(2+). Residues Ile195 and Asp215 each coordinate NAD(+).

This sequence belongs to the zinc-containing alcohol dehydrogenase family. Zn(2+) is required as a cofactor.

It carries out the reaction erythritol + NAD(+) = D-erythrulose + NADH + H(+). The catalysed reaction is L-threitol + NAD(+) = L-erythrulose + NADH + H(+). It functions in the pathway carbohydrate metabolism; erythritol degradation. The protein operates within carbohydrate metabolism; L-threitol degradation. Its function is as follows. Catalyzes the NAD-dependent reversible oxidation of erythritol and L-threitol. Involved in the degradation pathways of erythritol and L-threitol, that allow M.smegmatis to grow on these compounds as the sole carbon source. This Mycolicibacterium smegmatis (strain ATCC 700084 / mc(2)155) (Mycobacterium smegmatis) protein is Erythritol/L-threitol dehydrogenase.